Reading from the N-terminus, the 372-residue chain is Ciliary neurotrophic factor receptor subunit alpha (372 aa).

The N-terminal stretch at M1 to A22 is a signal peptide. In terms of domain architecture, Ig-like C2-type spans P27–H104. The cysteines at positions 46 and 89 are disulfide-linked. Residues N60, N70, N142, and N190 are each glycosylated (N-linked (GlcNAc...) asparagine). Fibronectin type-III domains lie at P108–D205 and P206–P306. The WSXWS motif motif lies at W290–S294. Residues P301–L340 form a disordered region. A compositionally biased stretch (low complexity) spans T311–L326. S342 is lipidated: GPI-anchor amidated serine. A propeptide spans G343–I372 (removed in mature form).

It belongs to the type I cytokine receptor family. Type 3 subfamily. Forms a heterotrimer with LIFR and IL6ST. Interacts with heterodimeric neurotropic cytokine composed of CLCF1/CLC and CRLF1/CLF-1. Either alone or in complex with the heterodimer CLCF1-CRLF1 interacts with SORL1; this interaction may promote internalization and lysosomal degradation. Component of a receptor complex composed of IL6ST/GP130, IL27RA/WSX1 and CNTFR which interacts with the neuroprotective peptide humanin. As to expression, nervous system and skeletal muscle.

The protein localises to the cell membrane. Functionally, binds to CNTF. The alpha subunit provides the receptor specificity. Receptor for heterodimeric neurotropic cytokine composed of CLCF1/CLC and CRLF1/CLF-1. Acts as a receptor for the neuroprotective peptide humanin as part of a complex with IL6ST/GP130 and IL27RA/WSX1. In Homo sapiens (Human), this protein is Ciliary neurotrophic factor receptor subunit alpha (CNTFR).